Consider the following 390-residue polypeptide: Dual-specificity RNA methyltransferase RlmN (390 aa).

The active-site Proton acceptor is E110. In terms of domain architecture, Radical SAM core spans 116-355 (EADRATLCVS…VIIRKTRGDD (240 aa)). Cysteines 123 and 360 form a disulfide. Residues C130, C134, and C137 each contribute to the [4Fe-4S] cluster site. S-adenosyl-L-methionine-binding positions include 184–185 (GE), S216, 238–240 (SLH), and N317. Catalysis depends on C360, which acts as the S-methylcysteine intermediate.

The protein belongs to the radical SAM superfamily. RlmN family. The cofactor is [4Fe-4S] cluster.

Its subcellular location is the cytoplasm. The enzyme catalyses adenosine(2503) in 23S rRNA + 2 reduced [2Fe-2S]-[ferredoxin] + 2 S-adenosyl-L-methionine = 2-methyladenosine(2503) in 23S rRNA + 5'-deoxyadenosine + L-methionine + 2 oxidized [2Fe-2S]-[ferredoxin] + S-adenosyl-L-homocysteine. The catalysed reaction is adenosine(37) in tRNA + 2 reduced [2Fe-2S]-[ferredoxin] + 2 S-adenosyl-L-methionine = 2-methyladenosine(37) in tRNA + 5'-deoxyadenosine + L-methionine + 2 oxidized [2Fe-2S]-[ferredoxin] + S-adenosyl-L-homocysteine. Specifically methylates position 2 of adenine 2503 in 23S rRNA and position 2 of adenine 37 in tRNAs. m2A2503 modification seems to play a crucial role in the proofreading step occurring at the peptidyl transferase center and thus would serve to optimize ribosomal fidelity. This is Dual-specificity RNA methyltransferase RlmN from Haemophilus influenzae (strain PittEE).